The primary structure comprises 446 residues: ATP synthase subunit b-delta (446 aa).

Residues 1–168 (MSTFIGQLVG…PKGADVEYPL (168 aa)) are ATP synthase subunit b. Residues 4-24 (FIGQLVGFAAIVYLVWWYVVP) form a helical membrane-spanning segment. The ATP synthase subunit delta stretch occupies residues 169–446 (LAKMRSASRR…LVAAEAALPD (278 aa)).

This sequence in the N-terminal section; belongs to the ATPase B chain family. It in the C-terminal section; belongs to the ATPase delta chain family. As to quaternary structure, F-type ATPases have 2 components, F(1) - the catalytic core - and F(0) - the membrane proton channel. F(1) has five subunits: alpha(3), beta(3), gamma(1), delta(1), epsilon(1). F(0) has three main subunits: a(1), b(2) and c(10-14). The alpha and beta chains form an alternating ring which encloses part of the gamma chain. F(1) is attached to F(0) by a central stalk formed by the gamma and epsilon chains, while a peripheral stalk is formed by the delta and b chains.

The protein resides in the cell membrane. F(1)F(0) ATP synthase produces ATP from ADP in the presence of a proton or sodium gradient. F-type ATPases consist of two structural domains, F(1) containing the extramembraneous catalytic core and F(0) containing the membrane proton channel, linked together by a central stalk and a peripheral stalk. During catalysis, ATP synthesis in the catalytic domain of F(1) is coupled via a rotary mechanism of the central stalk subunits to proton translocation. Its function is as follows. This fusion protein includes a component of the F(0) channel (subunit b) and of the F(1) subunit (subunit delta). Two copies of subunit b and one of delta together form the peripheral 'stator' stalk which links F(1) to F(0). This Mycobacterium leprae (strain Br4923) protein is ATP synthase subunit b-delta (atpFH).